Here is a 1073-residue protein sequence, read N- to C-terminus: Serine/threonine-protein phosphatase 6 regulatory ankyrin repeat subunit C (1073 aa).

28 ANK repeats span residues threonine 7 to valine 36, glutamate 40 to alanine 69, valine 73 to alanine 102, tyrosine 106 to valine 135, threonine 139 to threonine 168, lysine 172 to cysteine 201, lysine 205 to glutamate 234, phenylalanine 238 to glutamine 267, lysine 271 to phenylalanine 301, glutamate 305 to cysteine 334, tyrosine 338 to arginine 367, histidine 371 to isoleucine 400, leucine 422 to arginine 451, phenylalanine 455 to glutamate 484, lysine 488 to leucine 544, glutamine 548 to aspartate 578, isoleucine 583 to valine 612, lysine 616 to valine 645, arginine 650 to isoleucine 679, histidine 686 to alanine 715, arginine 719 to cysteine 748, lysine 752 to proline 781, serine 789 to leucine 818, asparagine 821 to asparagine 851, lysine 856 to threonine 885, leucine 889 to valine 919, asparagine 923 to leucine 952, and alanine 959 to alanine 988.

As to quaternary structure, protein phosphatase 6 (PP6) holoenzyme is proposed to be a heterotrimeric complex formed by the catalytic subunit, a SAPS domain-containing subunit (PP6R) and an ankyrin repeat-domain containing regulatory subunit (ARS).

Putative regulatory subunit of protein phosphatase 6 (PP6) that may be involved in the recognition of phosphoprotein substrates. The protein is Serine/threonine-protein phosphatase 6 regulatory ankyrin repeat subunit C (ANKRD52) of Gallus gallus (Chicken).